Here is a 101-residue protein sequence, read N- to C-terminus: Movement protein (101 aa).

A helical membrane pass occupies residues 30–50 (EVAILSFVALICIYLLYLWVL). Positions 80 to 101 (PIPNTLEPTAPVHPGPFVPGQG) are disordered. Pro residues predominate over residues 90–101 (PVHPGPFVPGQG).

Belongs to the mastrevirus movement protein family. In terms of assembly, interacts with the capsid protein (CP). Part of a MP-CP-viral DNA complex.

The protein localises to the host membrane. Its function is as follows. Involved in the viral transport within, and between cells. The chain is Movement protein from Avena sativa (Oat).